Consider the following 694-residue polypeptide: Elongation factor G (694 aa).

The tr-type G domain maps to 12 to 286 (SKLRNIGIMA…AVVDYLPSPI (275 aa)). GTP-binding positions include 21 to 28 (AHIDAGKT), 85 to 89 (DTPGH), and 139 to 142 (NKMD).

Belongs to the TRAFAC class translation factor GTPase superfamily. Classic translation factor GTPase family. EF-G/EF-2 subfamily.

It localises to the cytoplasm. In terms of biological role, catalyzes the GTP-dependent ribosomal translocation step during translation elongation. During this step, the ribosome changes from the pre-translocational (PRE) to the post-translocational (POST) state as the newly formed A-site-bound peptidyl-tRNA and P-site-bound deacylated tRNA move to the P and E sites, respectively. Catalyzes the coordinated movement of the two tRNA molecules, the mRNA and conformational changes in the ribosome. The chain is Elongation factor G from Pseudothermotoga lettingae (strain ATCC BAA-301 / DSM 14385 / NBRC 107922 / TMO) (Thermotoga lettingae).